Here is a 203-residue protein sequence, read N- to C-terminus: Large ribosomal subunit protein bL25 (203 aa).

Belongs to the bacterial ribosomal protein bL25 family. CTC subfamily. In terms of assembly, part of the 50S ribosomal subunit; part of the 5S rRNA/L5/L18/L25 subcomplex. Contacts the 5S rRNA. Binds to the 5S rRNA independently of L5 and L18.

Functionally, this is one of the proteins that binds to the 5S RNA in the ribosome where it forms part of the central protuberance. This Psychromonas ingrahamii (strain DSM 17664 / CCUG 51855 / 37) protein is Large ribosomal subunit protein bL25.